Here is a 323-residue protein sequence, read N- to C-terminus: UDP-N-acetylenolpyruvoylglucosamine reductase (323 aa).

Residues 52–217 (KSGGAADWLF…VSARLQGEPG (166 aa)) enclose the FAD-binding PCMH-type domain. Arg197 is a catalytic residue. The tract at residues 234–253 (EQSQPVRTKTGGSTFKNPPG) is disordered. Over residues 235–249 (QSQPVRTKTGGSTFK) the composition is skewed to polar residues. Ser246 (proton donor) is an active-site residue. Residue Glu316 is part of the active site.

This sequence belongs to the MurB family. It depends on FAD as a cofactor.

Its subcellular location is the cytoplasm. It catalyses the reaction UDP-N-acetyl-alpha-D-muramate + NADP(+) = UDP-N-acetyl-3-O-(1-carboxyvinyl)-alpha-D-glucosamine + NADPH + H(+). It functions in the pathway cell wall biogenesis; peptidoglycan biosynthesis. In terms of biological role, cell wall formation. The chain is UDP-N-acetylenolpyruvoylglucosamine reductase from Erythrobacter litoralis (strain HTCC2594).